A 292-amino-acid chain; its full sequence is Aquaporin-3 (292 aa).

Topologically, residues 1–24 are cytoplasmic; the sequence is MGRQKELVSRCGEMLHIRYRLLRQ. Residues 25-42 traverse the membrane as a helical segment; it reads ALAECLGTLILVMFGCGS. The Extracellular portion of the chain corresponds to 43–56; the sequence is VAQVVLSRGTHGGF. Residues 57–74 traverse the membrane as a helical segment; it reads LTINLAFGFAVTLGILIA. The Cytoplasmic segment spans residues 75-78; it reads GQVS. An intramembrane region (discontinuously helical) is located at residues 79 to 92; it reads GAHLNPAVTFAMCF. Residues 83–85 carry the NPA 1 motif; sequence NPA. Residues 93-100 lie on the Cytoplasmic side of the membrane; sequence LAREPWIK. A helical transmembrane segment spans residues 101–121; it reads LPIYTLAQTLGAFLGAGIVFG. Topologically, residues 122-159 are extracellular; the sequence is LYYDAIWHFADNQLFVSGPNGTAGIFATYPSGHLDMIN. N-linked (GlcNAc...) asparagine glycosylation is present at asparagine 141. Residues 160–177 form a helical membrane-spanning segment; the sequence is GFFDQFIGTASLIVCVLA. The Cytoplasmic portion of the chain corresponds to 178 to 189; it reads IVDPYNNPVPRG. Residues 190–206 traverse the membrane as a helical segment; that stretch reads LEAFTVGLVVLVIGTSM. The Extracellular portion of the chain corresponds to 207–210; it reads GFNS. The segment at residues 211–224 is an intramembrane region (discontinuously helical); it reads GYAVNPARDFGPRL. The short motif at 215-217 is the NPA 2 element; it reads NPA. Residues 225–242 are Extracellular-facing; it reads FTALAGWGSAVFTTGQHW. A helical transmembrane segment spans residues 243–264; it reads WWVPIVSPLLGSIAGVFVYQLM. At 265-292 the chain is on the cytoplasmic side; it reads IGCHLEQPPPSNEEENVKLAHVKHKEQI.

Belongs to the MIP/aquaporin (TC 1.A.8) family. Homotetramer; each monomer provides an independent glycerol/water pore. Could also exist in other oligomeric states. In terms of tissue distribution, widely expressed in epithelial cells of kidney (collecting ducts) and airways, in keratinocytes, immature dendritic cells and erythrocytes. Isoform 2 is not detectable in erythrocytes at the protein level.

It localises to the cell membrane. The protein localises to the basolateral cell membrane. The enzyme catalyses glycerol(in) = glycerol(out). It carries out the reaction H2O(in) = H2O(out). The catalysed reaction is H2O2(out) = H2O2(in). It catalyses the reaction urea(in) = urea(out). With respect to regulation, glycerol transport is regulated by pH, with the porin being permeable to glycerol at pH 7.4 but not at pH 5.5. Water permeability, however, is not influenced by pH. Aquaglyceroporins form homotetrameric transmembrane channels, with each monomer independently mediating glycerol and water transport across the plasma membrane along their osmotic gradient. Could also be permeable to urea. Also participates in cell permeability to H2O2 and H2O2-mediated signaling. In skin, transports glycerol to the epidermis and stratum corneum, where it maintains hydration, elasticity, and supports lipid biosynthesis for barrier repair. In kidney, contributes to the reabsorption of water, helping the body maintain proper fluid balance. This is Aquaporin-3 from Homo sapiens (Human).